A 1025-amino-acid chain; its full sequence is Multidrug resistance protein MdtC (1025 aa).

12 consecutive transmembrane segments (helical) span residues 3 to 23 (FFAL…AITL), 333 to 353 (EVEQ…FLFL), 360 to 380 (IIPA…MYLC), 387 to 407 (LSLM…IVVL), 431 to 451 (VGFT…PLLL), 463 to 483 (FAVT…TLTP), 528 to 548 (LVGM…ISIP), 853 to 873 (VILI…LYES), 875 to 895 (VHPL…LLAL), 897 to 917 (LFNA…IGIV), 953 to 973 (PIMM…LSGG), and 984 to 1004 (ITIV…TPVV).

The protein belongs to the resistance-nodulation-cell division (RND) (TC 2.A.6) family. MdtC subfamily. Part of a tripartite efflux system composed of MdtA, MdtB and MdtC. MdtC forms a heteromultimer with MdtB.

The protein resides in the cell inner membrane. In terms of biological role, the MdtABC tripartite complex confers resistance against novobiocin and deoxycholate. The polypeptide is Multidrug resistance protein MdtC (Escherichia coli O157:H7 (strain EC4115 / EHEC)).